We begin with the raw amino-acid sequence, 115 residues long: Large ribosomal subunit protein bL19 (115 aa).

Belongs to the bacterial ribosomal protein bL19 family.

In terms of biological role, this protein is located at the 30S-50S ribosomal subunit interface and may play a role in the structure and function of the aminoacyl-tRNA binding site. The sequence is that of Large ribosomal subunit protein bL19 from Francisella tularensis subsp. mediasiatica (strain FSC147).